The following is a 432-amino-acid chain: Glutamate-1-semialdehyde 2,1-aminomutase (432 aa).

The residue at position 271 (Lys271) is an N6-(pyridoxal phosphate)lysine.

This sequence belongs to the class-III pyridoxal-phosphate-dependent aminotransferase family. HemL subfamily. In terms of assembly, homodimer. Requires pyridoxal 5'-phosphate as cofactor.

The protein resides in the cytoplasm. It carries out the reaction (S)-4-amino-5-oxopentanoate = 5-aminolevulinate. Its pathway is porphyrin-containing compound metabolism; protoporphyrin-IX biosynthesis; 5-aminolevulinate from L-glutamyl-tRNA(Glu): step 2/2. It participates in porphyrin-containing compound metabolism; chlorophyll biosynthesis. The chain is Glutamate-1-semialdehyde 2,1-aminomutase from Prochlorococcus marinus (strain MIT 9211).